We begin with the raw amino-acid sequence, 367 residues long: Alcohol dehydrogenase 2 (367 aa).

Zn(2+) is bound by residues Cys48, His74, Cys107, Cys110, Cys113, Cys121, and Cys163. NAD(+) contacts are provided by residues 187-193, Asp212, Lys216, 286-288, and Arg361; these read GAGGGLG and VGI.

This sequence belongs to the zinc-containing alcohol dehydrogenase family. As to quaternary structure, homotetramer. The cofactor is Zn(2+).

The protein localises to the cytoplasm. It catalyses the reaction a primary alcohol + NAD(+) = an aldehyde + NADH + H(+). The catalysed reaction is a secondary alcohol + NAD(+) = a ketone + NADH + H(+). The chain is Alcohol dehydrogenase 2 (alcB) from Emericella nidulans (strain FGSC A4 / ATCC 38163 / CBS 112.46 / NRRL 194 / M139) (Aspergillus nidulans).